The sequence spans 229 residues: Ribonuclease 3 (229 aa).

The region spanning 3–125 is the RNase III domain; that stretch reads VNALQEKLGY…LIGGIFLDSN (123 aa). Glu38 is a binding site for Mg(2+). The active site involves Asp42. Asn111 and Glu114 together coordinate Mg(2+). Glu114 is an active-site residue. One can recognise a DRBM domain in the interval 155 to 225; the sequence is DPKTRLQEYM…AAKVLEALEH (71 aa).

It belongs to the ribonuclease III family. In terms of assembly, homodimer. Requires Mg(2+) as cofactor.

The protein localises to the cytoplasm. It carries out the reaction Endonucleolytic cleavage to 5'-phosphomonoester.. In terms of biological role, digests double-stranded RNA. Involved in the processing of primary rRNA transcript to yield the immediate precursors to the large and small rRNAs (23S and 16S). Processes some mRNAs, and tRNAs when they are encoded in the rRNA operon. Processes pre-crRNA and tracrRNA of type II CRISPR loci if present in the organism. The sequence is that of Ribonuclease 3 from Blochmanniella pennsylvanica (strain BPEN).